A 177-amino-acid polypeptide reads, in one-letter code: uncharacterized protein (177 aa).

To M.jannaschii MJ0628.

This is an uncharacterized protein from Methanocaldococcus jannaschii (strain ATCC 43067 / DSM 2661 / JAL-1 / JCM 10045 / NBRC 100440) (Methanococcus jannaschii).